A 559-amino-acid chain; its full sequence is Glucose-6-phosphate isomerase (559 aa).

Glutamate 352 (proton donor) is an active-site residue. Catalysis depends on residues histidine 383 and lysine 511.

It belongs to the GPI family.

Its subcellular location is the cytoplasm. It carries out the reaction alpha-D-glucose 6-phosphate = beta-D-fructose 6-phosphate. It participates in carbohydrate biosynthesis; gluconeogenesis. It functions in the pathway carbohydrate degradation; glycolysis; D-glyceraldehyde 3-phosphate and glycerone phosphate from D-glucose: step 2/4. Its function is as follows. Catalyzes the reversible isomerization of glucose-6-phosphate to fructose-6-phosphate. This chain is Glucose-6-phosphate isomerase, found in Chlorobaculum tepidum (strain ATCC 49652 / DSM 12025 / NBRC 103806 / TLS) (Chlorobium tepidum).